The chain runs to 269 residues: Diaminopimelate epimerase (269 aa).

Residues N20 and N63 each contribute to the substrate site. C72 (proton donor) is an active-site residue. Substrate-binding positions include 73–74, N179, and 197–198; these read GN and ER. C207 serves as the catalytic Proton acceptor. A substrate-binding site is contributed by 208-209; it reads GT.

Belongs to the diaminopimelate epimerase family. Homodimer.

It localises to the cytoplasm. It catalyses the reaction (2S,6S)-2,6-diaminopimelate = meso-2,6-diaminopimelate. It functions in the pathway amino-acid biosynthesis; L-lysine biosynthesis via DAP pathway; DL-2,6-diaminopimelate from LL-2,6-diaminopimelate: step 1/1. Functionally, catalyzes the stereoinversion of LL-2,6-diaminopimelate (L,L-DAP) to meso-diaminopimelate (meso-DAP), a precursor of L-lysine and an essential component of the bacterial peptidoglycan. The protein is Diaminopimelate epimerase of Chlamydia muridarum (strain MoPn / Nigg).